Consider the following 116-residue polypeptide: Fluoride-specific ion channel FluC 1 (116 aa).

Transmembrane regions (helical) follow at residues 2-22, 33-53, 63-83, and 96-116; these read LVLVGLAGAGAAVGALSRYGI, PLPIATLFINLTGALLLGWIL, IFLGTGIMGGYTTFSTMINEL, and WEYFGLSLVGGLVMVYLGTLI. Residues G71 and T74 each contribute to the Na(+) site.

This sequence belongs to the fluoride channel Fluc/FEX (TC 1.A.43) family.

It is found in the cell membrane. The enzyme catalyses fluoride(in) = fluoride(out). With respect to regulation, na(+) is not transported, but it plays an essential structural role and its presence is essential for fluoride channel function. Functionally, fluoride-specific ion channel. Important for reducing fluoride concentration in the cell, thus reducing its toxicity. This Lactiplantibacillus plantarum (strain ATCC BAA-793 / NCIMB 8826 / WCFS1) (Lactobacillus plantarum) protein is Fluoride-specific ion channel FluC 1.